The sequence spans 555 residues: Formate--tetrahydrofolate ligase (555 aa).

An ATP-binding site is contributed by 65-72 (TPAGEGKS).

This sequence belongs to the formate--tetrahydrofolate ligase family.

The enzyme catalyses (6S)-5,6,7,8-tetrahydrofolate + formate + ATP = (6R)-10-formyltetrahydrofolate + ADP + phosphate. Its pathway is one-carbon metabolism; tetrahydrofolate interconversion. The polypeptide is Formate--tetrahydrofolate ligase (Staphylococcus aureus (strain MRSA252)).